The following is a 429-amino-acid chain: Probable M18 family aminopeptidase 2 (429 aa).

The Zn(2+) site is built by His82, His156, and His401.

The protein belongs to the peptidase M18 family. Requires Zn(2+) as cofactor.

This Pseudomonas putida (strain GB-1) protein is Probable M18 family aminopeptidase 2.